A 244-amino-acid chain; its full sequence is Probable transcriptional regulatory protein Dgeo_2194 (244 aa).

Residues 1-21 form a disordered region; the sequence is MAGHSKWAQIKRKKGANDKKR.

Belongs to the TACO1 family.

The protein localises to the cytoplasm. The protein is Probable transcriptional regulatory protein Dgeo_2194 of Deinococcus geothermalis (strain DSM 11300 / CIP 105573 / AG-3a).